The following is a 517-amino-acid chain: Maturase K (517 aa).

It belongs to the intron maturase 2 family. MatK subfamily.

The protein localises to the plastid. Its subcellular location is the chloroplast. Its function is as follows. Usually encoded in the trnK tRNA gene intron. Probably assists in splicing its own and other chloroplast group II introns. This chain is Maturase K, found in Acer pseudoplatanus (Sycamore maple).